We begin with the raw amino-acid sequence, 602 residues long: Elongation factor 4 (602 aa).

Residues 7-189 (NNIRNFSIIA…RILTAVPPPQ (183 aa)) enclose the tr-type G domain. GTP is bound by residues 19 to 24 (DHGKST) and 136 to 139 (NKID).

It belongs to the TRAFAC class translation factor GTPase superfamily. Classic translation factor GTPase family. LepA subfamily.

Its subcellular location is the cell inner membrane. It carries out the reaction GTP + H2O = GDP + phosphate + H(+). Its function is as follows. Required for accurate and efficient protein synthesis under certain stress conditions. May act as a fidelity factor of the translation reaction, by catalyzing a one-codon backward translocation of tRNAs on improperly translocated ribosomes. Back-translocation proceeds from a post-translocation (POST) complex to a pre-translocation (PRE) complex, thus giving elongation factor G a second chance to translocate the tRNAs correctly. Binds to ribosomes in a GTP-dependent manner. This chain is Elongation factor 4, found in Protochlamydia amoebophila (strain UWE25).